The chain runs to 347 residues: Ryncolin-2 (347 aa).

The first 19 residues, 1 to 19 (MKPWAAFHLIFLVASSLEG), serve as a signal peptide directing secretion. The interval 49–115 (LQSQPGIPGI…DKGDKGDKGD (67 aa)) is disordered. Residues 57 to 114 (GIPGVPGINGSEGLKGDPGPQGLPGETGFDGIPGVAGPKGDKGDQGDKGDKGDKGDKG) enclose the Collagen-like domain. Residues 95–115 (KGDKGDQGDKGDKGDKGDKGD) are compositionally biased toward basic and acidic residues. One can recognise a Fibrinogen C-terminal domain in the interval 121-341 (DCPPTDVEVR…YADMKIRPQQ (221 aa)). Intrachain disulfides connect Cys132/Cys160 and Cys284/Cys297.

The protein belongs to the ficolin lectin family. Veficolin subfamily. Hydroxylated, possibly at Pro-74 and Pro-94. As to expression, expressed by the venom duct.

The protein localises to the secreted. Initiates complement activation and/or interferes in platelet aggregation and/or blood coagulation. The protein is Ryncolin-2 of Cerberus rynchops (Dog-faced water snake).